The following is a 351-amino-acid chain: 3-dehydroquinate synthase (351 aa).

NAD(+) is bound by residues 60 to 65 (DGEEYK), 94 to 98 (GVISD), 118 to 119 (TT), lysine 131, lysine 140, and 158 to 161 (FLKT). Zn(2+) contacts are provided by glutamate 173, histidine 239, and histidine 256.

The protein belongs to the sugar phosphate cyclases superfamily. Dehydroquinate synthase family. Requires NAD(+) as cofactor. It depends on Co(2+) as a cofactor. Zn(2+) serves as cofactor.

It is found in the cytoplasm. The enzyme catalyses 7-phospho-2-dehydro-3-deoxy-D-arabino-heptonate = 3-dehydroquinate + phosphate. It participates in metabolic intermediate biosynthesis; chorismate biosynthesis; chorismate from D-erythrose 4-phosphate and phosphoenolpyruvate: step 2/7. In terms of biological role, catalyzes the conversion of 3-deoxy-D-arabino-heptulosonate 7-phosphate (DAHP) to dehydroquinate (DHQ). The polypeptide is 3-dehydroquinate synthase (Campylobacter jejuni subsp. jejuni serotype O:2 (strain ATCC 700819 / NCTC 11168)).